Here is a 116-residue protein sequence, read N- to C-terminus: Non-specific lipid-transfer protein 8 (116 aa).

The N-terminal stretch at 1–24 (MNVLKCLAIISVLGIFFIPRYSES) is a signal peptide. 4 cysteine pairs are disulfide-bonded: cysteine 28–cysteine 76, cysteine 38–cysteine 53, cysteine 54–cysteine 98, and cysteine 74–cysteine 112.

The protein belongs to the plant LTP family.

Functionally, plant non-specific lipid-transfer proteins transfer phospholipids as well as galactolipids across membranes. May play a role in wax or cutin deposition in the cell walls of expanding epidermal cells and certain secretory tissues. In Arabidopsis thaliana (Mouse-ear cress), this protein is Non-specific lipid-transfer protein 8 (LTP8).